The primary structure comprises 143 residues: D-aminoacyl-tRNA deacylase (143 aa).

The Gly-cisPro motif, important for rejection of L-amino acids motif lies at 135-136 (GP).

It belongs to the DTD family. Homodimer.

The protein localises to the cytoplasm. It carries out the reaction glycyl-tRNA(Ala) + H2O = tRNA(Ala) + glycine + H(+). The catalysed reaction is a D-aminoacyl-tRNA + H2O = a tRNA + a D-alpha-amino acid + H(+). An aminoacyl-tRNA editing enzyme that deacylates mischarged D-aminoacyl-tRNAs. Also deacylates mischarged glycyl-tRNA(Ala), protecting cells against glycine mischarging by AlaRS. Acts via tRNA-based rather than protein-based catalysis; rejects L-amino acids rather than detecting D-amino acids in the active site. By recycling D-aminoacyl-tRNA to D-amino acids and free tRNA molecules, this enzyme counteracts the toxicity associated with the formation of D-aminoacyl-tRNA entities in vivo and helps enforce protein L-homochirality. This is D-aminoacyl-tRNA deacylase from Mycobacterium bovis (strain BCG / Pasteur 1173P2).